The chain runs to 348 residues: MSPFQSLLWTGSQLRLLDQRSLPQETQYRYYDTAAGVAQAIQDMVVRGAPAIGVAAAFGLVLTSQQSAMTDSADLRAQLAIAAETLKAARPTAVNLAWAVDRMLAAIANPDLEAAAIHATLLAAAQQLYDEDVAVNRQIGLNAQALIPQQANVIHHCNTGALATVDYGTALGIIRIAHEQGKQIHAYLDETRPRLQGANLSAFELQAYGVPHTVIVDGASGFLMRQQQIDCCLVGCDRVTANGDVANKIGTYNLALAAKAHGVPFYVACPISTIDRSLATGAEIEIEERDGREITEIRGQAIAPAGTKTWNPAFDITPAELVTAIITERGILYPPYGQALEQVLINPG.

Residues 47-49, arginine 90, and glutamine 196 each bind substrate; that span reads RGA. Aspartate 237 functions as the Proton donor in the catalytic mechanism. Position 247–248 (247–248) interacts with substrate; it reads NK.

Belongs to the eIF-2B alpha/beta/delta subunits family. MtnA subfamily.

The enzyme catalyses 5-(methylsulfanyl)-alpha-D-ribose 1-phosphate = 5-(methylsulfanyl)-D-ribulose 1-phosphate. The protein operates within amino-acid biosynthesis; L-methionine biosynthesis via salvage pathway; L-methionine from S-methyl-5-thio-alpha-D-ribose 1-phosphate: step 1/6. Its function is as follows. Catalyzes the interconversion of methylthioribose-1-phosphate (MTR-1-P) into methylthioribulose-1-phosphate (MTRu-1-P). This is Methylthioribose-1-phosphate isomerase from Synechococcus sp. (strain ATCC 27144 / PCC 6301 / SAUG 1402/1) (Anacystis nidulans).